A 304-amino-acid polypeptide reads, in one-letter code: Undecaprenyl-diphosphatase (304 aa).

8 helical membrane passes run 5–25 (FLFI…EFVP), 47–67 (GFPE…VVVL), 72–92 (ISSS…LKTS), 111–131 (FGIN…LFHD), 137–157 (LFST…LIVI), 209–231 (ISGL…AMVG), 248–268 (TNWI…LVVI), and 283–303 (FAIY…TKVI).

Belongs to the UppP family.

It localises to the cell membrane. The catalysed reaction is di-trans,octa-cis-undecaprenyl diphosphate + H2O = di-trans,octa-cis-undecaprenyl phosphate + phosphate + H(+). Its function is as follows. Catalyzes the dephosphorylation of undecaprenyl diphosphate (UPP). Confers resistance to bacitracin. The sequence is that of Undecaprenyl-diphosphatase from Clostridium perfringens (strain ATCC 13124 / DSM 756 / JCM 1290 / NCIMB 6125 / NCTC 8237 / Type A).